Consider the following 570-residue polypeptide: Enhancer of polycomb-like protein 1 (570 aa).

Residues 541-570 (ALNNLNSGQTSGQTMGSNPGPGAIAPTPET) are disordered. Positions 543 to 557 (NNLNSGQTSGQTMGS) are enriched in polar residues.

This sequence belongs to the enhancer of polycomb family. As to quaternary structure, component of the NuA4 histone acetyltransferase complex.

The protein resides in the nucleus. Functionally, component of the NuA4 histone acetyltransferase complex which is involved in transcriptional activation of selected genes principally by acetylation of nucleosomal histone H4 and H2A. The NuA4 complex is also involved in DNA repair. Involved in gene silencing by neighboring heterochromatin, blockage of the silencing spreading along the chromosome, and required for cell cycle progression through G2/M. The protein is Enhancer of polycomb-like protein 1 (epl1) of Emericella nidulans (strain FGSC A4 / ATCC 38163 / CBS 112.46 / NRRL 194 / M139) (Aspergillus nidulans).